The following is a 374-amino-acid chain: Methylthioribose-1-phosphate isomerase (374 aa).

Asp251 functions as the Proton donor in the catalytic mechanism.

The protein belongs to the eIF-2B alpha/beta/delta subunits family. MtnA subfamily.

It localises to the cytoplasm. The protein resides in the nucleus. The enzyme catalyses 5-(methylsulfanyl)-alpha-D-ribose 1-phosphate = 5-(methylsulfanyl)-D-ribulose 1-phosphate. It participates in amino-acid biosynthesis; L-methionine biosynthesis via salvage pathway; L-methionine from S-methyl-5-thio-alpha-D-ribose 1-phosphate: step 1/6. Functionally, catalyzes the interconversion of methylthioribose-1-phosphate (MTR-1-P) into methylthioribulose-1-phosphate (MTRu-1-P). The sequence is that of Methylthioribose-1-phosphate isomerase (IDI2) from Oryza sativa subsp. japonica (Rice).